We begin with the raw amino-acid sequence, 3993 residues long: Intermembrane lipid transfer protein VPS13B (3993 aa).

A Chorein N-terminal domain is found at 2–102 (LESYVTPILM…KDGIQDDHES (101 aa)). The interval 100–133 (HESCGSNSTNRSTAENTKSSIKPRRIQQAAPADP) is disordered. The span at 103-119 (CGSNSTNRSTAENTKSS) shows a compositional bias: polar residues. Ser413, Ser998, Ser1001, and Ser1032 each carry phosphoserine. Disordered regions lie at residues 1262–1303 (SPVW…PFSD), 1616–1637 (DQLK…ERNS), and 1735–1770 (TKAT…DSGI). The span at 1264 to 1291 (VWSSVGTAPPDTSTCSPSADIGTTTEGD) shows a compositional bias: polar residues. A compositionally biased stretch (basic and acidic residues) spans 1739–1750 (EISKQEQKKVDT). Residues 1756-1770 (AETSSRYSGAQDSGI) show a composition bias toward polar residues. The residue at position 1789 (Ser1789) is a Phosphoserine. The disordered stretch occupies residues 2048 to 2067 (HSSAHSKETSTPSDSILNMD). Positions 2604–2683 (HFVICNDTQE…TIQYKGRTAS (80 aa)) constitute an SHR-BD domain. Residues 3880–3993 (AFPITEISCA…KNKALRKGFS (114 aa)) are localizes the protein to the Golgi apparatus.

The protein belongs to the VPS13 family. Interacts with STX6. Interacts with STX12 (via N-terminus). Interacts with RAB6A isoform 1 (GTP-bound) and isoform 2 (GTP-bound). Interacts with RAB6B (GTP-bound). Ubiquitously expressed in all examined tissues.

The protein localises to the recycling endosome membrane. It localises to the cytoplasmic vesicle. It is found in the secretory vesicle. Its subcellular location is the acrosome membrane. The protein resides in the golgi apparatus. The protein localises to the cis-Golgi network membrane. It localises to the endoplasmic reticulum-Golgi intermediate compartment membrane. It is found in the trans-Golgi network membrane. Its subcellular location is the early endosome membrane. The protein resides in the lysosome membrane. In terms of biological role, mediates the transfer of lipids between membranes at organelle contact sites. Binds phosphatidylinositol 3-phosphate. Functions as a tethering factor in the slow endocytic recycling pathway, to assist traffic between early and recycling endosomes. Involved in the transport of proacrosomal vesicles to the nuclear dense lamina (NDL) during spermatid development. Plays a role in the assembly of the Golgi apparatus, possibly by mediating trafficking to the Golgi membrane. Plays a role in the development of the nervous system, and may be required for neuron projection development. May also play a role during adipose tissue development. Required for maintenance of the ocular lens. Required for proper organization of the Golgi. The sequence is that of Intermembrane lipid transfer protein VPS13B from Mus musculus (Mouse).